Reading from the N-terminus, the 240-residue chain is MELMAKPTFSIEVSQYGTTDLPATEKASSSSSSFETTNEEGVEESGLSRIWSGQTADYSSDSSSIGTPGDSEEDEEESENENDDVSSKELGLRGLASMSSLEDSLPSKRGLSNHYKGKSKSFGNLGEIGSVKEVAKQENPLNKRRRLQICNKLARKSFYSWQNPKSMPLLPVNEDEDDDDEDDDEEDLKSGFDENKSSSDEEGVKKVVVRKGSFKNRAYKSRSCFALSDLIEEEDDDDDQ.

Positions 1–128 are disordered; it reads MELMAKPTFS…SKSFGNLGEI (128 aa). Residues 51 to 66 are compositionally biased toward polar residues; that stretch reads WSGQTADYSSDSSSIG. A compositionally biased stretch (acidic residues) spans 70–84; the sequence is DSEEDEEESENENDD. A Nuclear localization signal motif is present at residues 142-150; that stretch reads NKRRRLQIC. A disordered region spans residues 163-207; sequence NPKSMPLLPVNEDEDDDDEDDDEEDLKSGFDENKSSSDEEGVKKV. Residues 173 to 187 show a composition bias toward acidic residues; it reads NEDEDDDDEDDDEED. Residues 188–205 show a composition bias toward basic and acidic residues; the sequence is LKSGFDENKSSSDEEGVK. The interval 202–229 is kinase-inducible domain (KID); the sequence is EGVKKVVVRKGSFKNRAYKSRSCFALSD. Position 213 is a phosphoserine (S213).

In terms of assembly, interacts with HDA19; Ser-213 is critical for this interaction.

It is found in the nucleus. Its function is as follows. Transcription activator which may regulates gene expression through interaction with the histone deacetylase HDA19. Promotes slightly the tolerance to cadmium (Cd) and to oxidizing chemicals (e.g. diamide and tert-butyl hydroperoxide (t-BOOH)). The sequence is that of Protein OXIDATIVE STRESS 3 LIKE 4 from Arabidopsis thaliana (Mouse-ear cress).